We begin with the raw amino-acid sequence, 397 residues long: Sulfate adenylyltransferase (397 aa).

It belongs to the sulfate adenylyltransferase family.

The catalysed reaction is sulfate + ATP + H(+) = adenosine 5'-phosphosulfate + diphosphate. It functions in the pathway sulfur metabolism; hydrogen sulfide biosynthesis; sulfite from sulfate: step 1/3. This chain is Sulfate adenylyltransferase (sat), found in Allochromatium vinosum (strain ATCC 17899 / DSM 180 / NBRC 103801 / NCIMB 10441 / D) (Chromatium vinosum).